A 268-amino-acid polypeptide reads, in one-letter code: Undecaprenyl-diphosphatase (268 aa).

Transmembrane regions (helical) follow at residues P41–F61, I89–Y109, I114–I134, L155–I175, F191–S211, F218–I238, and N248–L268.

Belongs to the UppP family.

Its subcellular location is the cell inner membrane. The catalysed reaction is di-trans,octa-cis-undecaprenyl diphosphate + H2O = di-trans,octa-cis-undecaprenyl phosphate + phosphate + H(+). Its function is as follows. Catalyzes the dephosphorylation of undecaprenyl diphosphate (UPP). Confers resistance to bacitracin. This chain is Undecaprenyl-diphosphatase, found in Prochlorococcus marinus (strain MIT 9312).